Here is a 495-residue protein sequence, read N- to C-terminus: Two-component response regulator-like APRR3 (495 aa).

Residues 65 to 183 (KVLLVENDDS…ELKNLWQHVW (119 aa)) enclose the Response regulatory domain. 2 disordered regions span residues 188 to 441 (SSSG…RWAQ) and 465 to 495 (HSRK…SEDN). The segment covering 206-217 (PESTQGSENDAS) has biased composition (polar residues). Residues 231–248 (GLSNQDGGSDNGSGTQSS) are compositionally biased toward low complexity. Polar residues predominate over residues 256-265 (TKSTSPSNQF). The segment covering 284-293 (RLKEAEDQKE) has biased composition (basic and acidic residues). The segment covering 294-304 (QIGTGSQTGMS) has biased composition (polar residues). Basic and acidic residues predominate over residues 307–319 (KKAEEPGDLEKNA). Positions 335–350 (NRSSGNSQVESKAPSS) are enriched in polar residues. Residues 349–372 (SSNREDLQSLEQTLKKTREDRDYK) are a coiled coil. Positions 351 to 378 (NREDLQSLEQTLKKTREDRDYKVGDRSV) are enriched in basic and acidic residues. Polar residues-rich tracts occupy residues 380 to 395 (RHSN…NGAT) and 420 to 436 (GSSS…SSGS). The CCT domain occupies 442–484 (REAALMKFRLKRKERCFEKKVRYHSRKKLAEQRPHVKGQFIRK). Residues 483–495 (RKRDDHKSGSEDN) show a composition bias toward basic and acidic residues.

This sequence belongs to the ARR-like family. In terms of assembly, interacts with APRR1/TOC1 (via N-terminus). Phosphorylated by WNK1; during the night. Phosphorylation is required for optimal interaction with APRR1/TOC1.

It localises to the nucleus. Controls photoperiodic flowering response. Component of the circadian clock. Controls the degradation of APRR1/TOC1 by the SCF(ZTL) complex. Expression of several members of the ARR-like family is controlled by circadian rhythm. The particular coordinated sequential expression of APRR9, APRR7, APRR5, APRR3 and APPR1 result to circadian waves that may be at the basis of the endogenous circadian clock. The sequence is that of Two-component response regulator-like APRR3 (APRR3) from Arabidopsis thaliana (Mouse-ear cress).